The chain runs to 176 residues: NAD(P)H-quinone oxidoreductase subunit 6, chloroplastic (176 aa).

5 consecutive transmembrane segments (helical) span residues 10–30 (ILVL…VLLT), 33–53 (IYSA…YFLL), 60–80 (VAQL…AVMF), 95–115 (IGDG…MTTI), and 152–172 (FYLP…GAIT).

It belongs to the complex I subunit 6 family. As to quaternary structure, NDH is composed of at least 16 different subunits, 5 of which are encoded in the nucleus.

It is found in the plastid. It localises to the chloroplast thylakoid membrane. The enzyme catalyses a plastoquinone + NADH + (n+1) H(+)(in) = a plastoquinol + NAD(+) + n H(+)(out). It carries out the reaction a plastoquinone + NADPH + (n+1) H(+)(in) = a plastoquinol + NADP(+) + n H(+)(out). Its function is as follows. NDH shuttles electrons from NAD(P)H:plastoquinone, via FMN and iron-sulfur (Fe-S) centers, to quinones in the photosynthetic chain and possibly in a chloroplast respiratory chain. The immediate electron acceptor for the enzyme in this species is believed to be plastoquinone. Couples the redox reaction to proton translocation, and thus conserves the redox energy in a proton gradient. The chain is NAD(P)H-quinone oxidoreductase subunit 6, chloroplastic (ndhG) from Brachypodium distachyon (Purple false brome).